Here is a 292-residue protein sequence, read N- to C-terminus: Acetyl-coenzyme A carboxylase carboxyl transferase subunit beta (292 aa).

The 257-residue stretch at 36–292 (MWSKCEKCAK…LLRMHEVDYE (257 aa)) folds into the CoA carboxyltransferase N-terminal domain. Cys40, Cys43, Cys59, and Cys62 together coordinate Zn(2+). The C4-type zinc-finger motif lies at 40-62 (CEKCAKILYTEDLRENFNVCPNC).

It belongs to the AccD/PCCB family. In terms of assembly, acetyl-CoA carboxylase is a heterohexamer composed of biotin carboxyl carrier protein (AccB), biotin carboxylase (AccC) and two subunits each of ACCase subunit alpha (AccA) and ACCase subunit beta (AccD). Zn(2+) is required as a cofactor.

It is found in the cytoplasm. The catalysed reaction is N(6)-carboxybiotinyl-L-lysyl-[protein] + acetyl-CoA = N(6)-biotinyl-L-lysyl-[protein] + malonyl-CoA. The protein operates within lipid metabolism; malonyl-CoA biosynthesis; malonyl-CoA from acetyl-CoA: step 1/1. Its function is as follows. Component of the acetyl coenzyme A carboxylase (ACC) complex. Biotin carboxylase (BC) catalyzes the carboxylation of biotin on its carrier protein (BCCP) and then the CO(2) group is transferred by the transcarboxylase to acetyl-CoA to form malonyl-CoA. The sequence is that of Acetyl-coenzyme A carboxylase carboxyl transferase subunit beta from Clostridium perfringens (strain ATCC 13124 / DSM 756 / JCM 1290 / NCIMB 6125 / NCTC 8237 / Type A).